Reading from the N-terminus, the 106-residue chain is Iron-sulfur cluster assembly protein CyaY (106 aa).

It belongs to the frataxin family.

In terms of biological role, involved in iron-sulfur (Fe-S) cluster assembly. May act as a regulator of Fe-S biogenesis. In Shigella flexneri, this protein is Iron-sulfur cluster assembly protein CyaY.